The following is a 90-amino-acid chain: Co-chaperonin GroES (90 aa).

The protein belongs to the GroES chaperonin family. In terms of assembly, heptamer of 7 subunits arranged in a ring. Interacts with the chaperonin GroEL.

Its subcellular location is the cytoplasm. Functionally, together with the chaperonin GroEL, plays an essential role in assisting protein folding. The GroEL-GroES system forms a nano-cage that allows encapsulation of the non-native substrate proteins and provides a physical environment optimized to promote and accelerate protein folding. GroES binds to the apical surface of the GroEL ring, thereby capping the opening of the GroEL channel. This Borreliella burgdorferi (strain ATCC 35210 / DSM 4680 / CIP 102532 / B31) (Borrelia burgdorferi) protein is Co-chaperonin GroES.